Here is a 555-residue protein sequence, read N- to C-terminus: MEGEEYDKILVLNFGSQYFHLIVKRLNNIKIFSETKDYGVELKDIKDMNIKGVILSGGPYSVTEAGSPHLKKEVFEYFLEKKIPIFGICYGMQEIAVQMNGEVKKSKTSEYGCTDVNILRNDNINNITYCRNFGDSSSAMDLYSNYKLMNETCCLFENIKSDITTVWMNHNDEVTKIPENFYLVSSSENCLICSIYNKEYNIYGVQYHPEVYESLDGELMFYNFAYNICKCKKQFDPIRYHELELKNIEKYKHDHYVIAAMSGGIDSTVAAAYTHKIFKERFFGIFIDNGLLRKNEAENVYTFLKSTFPDMNITKIDASENFLSNLQGVTDPEQKRKIIGKLFIEEFEKAVNNIDIDINKTFLLQGTLYPDIIESKCSKNLSDTIKTHHNVGGLPKNLKFKLFEPFKYLFKDDVKTLSRELNLPEEITNRHPFPGPGLAIRVIGEINKHKLNILREVDDIFINDLKQYGLYNQISQAFAVLLSSKSVGVRGDARSYDYVCVLRAVKTSSFMTANWYQIPYDILDKITTRILSEVKGVNRILYDVSSKPPATIEFE.

Positions 8 to 234 constitute a Glutamine amidotransferase type-1 domain; it reads KILVLNFGSQ…AYNICKCKKQ (227 aa). Cys-89 acts as the Nucleophile; for GATase activity in catalysis. L-glutamine is bound by residues Gln-93, Asn-169, Asp-172, and His-208. Active-site for GATase activity residues include His-208 and Glu-210. The region spanning 235–430 is the GMPS ATP-PPase domain; that stretch reads FDPIRYHELE…LNLPEEITNR (196 aa). An ATP-binding site is contributed by 262-268; sequence SGGIDST. Residues Arg-336, Gln-476, Lys-547, Ile-552, and Glu-553 each coordinate XMP.

As to quaternary structure, homodimer (via the GMPS ATP-PPase domain). The cofactor is Mg(2+).

It carries out the reaction XMP + L-glutamine + ATP + H2O = GMP + L-glutamate + AMP + diphosphate + 2 H(+). The protein operates within purine metabolism; GMP biosynthesis; GMP from XMP (L-Gln route): step 1/1. The GATase domain is allosterically activated by the binding of substrates, ATP and XMP, to the ATPPase domain, thus ensuring that glutamine hydrolysis occurs only when the ATPPase domain is primed to receive ammonia. Inhibited by Na(+). Inhibited by the reaction product GMP. Catalyzes the conversion of xanthine monophosphate (XMP) to GMP in the presence of glutamine and ATP through an adenyl-XMP intermediate, which is the final step of de novo synthesis of GMP. The conversion of XMP to GMP involves the coordinated action of the glutamine amidotransferase (GATase) domain that catalyzes the hydrolysis of the amide side chain of glutamine producing ammonia and the ATP pyrophosphatase (ATPPase) domain that catalyzes the synthesis of adenyl-XMP intermediate from ATP. The ammonia produced by the GATase domain is tunnelled to the ATP-PPase domain where it attacks the adenyl-XMP intermediate generating GMP. The chain is GMP synthase [glutamine-hydrolyzing] from Plasmodium falciparum (isolate 3D7).